The following is a 776-amino-acid chain: G protein-regulated inducer of neurite outgrowth 3 (776 aa).

2 disordered regions span residues methionine 1–proline 37 and valine 68–valine 312. The span at glutamine 101–glycine 118 shows a compositional bias: low complexity. 2 stretches are compositionally biased toward polar residues: residues proline 129–threonine 161 and glutamate 193–valine 203. Positions valine 208–glycine 217 are enriched in low complexity. Residues serine 242–proline 274 show a composition bias toward polar residues. Phosphoserine is present on residues serine 332 and serine 365. 2 disordered regions span residues isoleucine 518 to arginine 637 and leucine 723 to arginine 748. The segment covering lysine 520–threonine 552 has biased composition (basic and acidic residues). The segment covering proline 566–proline 580 has biased composition (polar residues). The span at serine 604–glycine 620 shows a compositional bias: low complexity. Over residues lysine 725–asparagine 742 the composition is skewed to polar residues.

May be involved in neurite outgrowth. In Homo sapiens (Human), this protein is G protein-regulated inducer of neurite outgrowth 3 (GPRIN3).